The sequence spans 218 residues: Thiamine-phosphate synthase (218 aa).

4-amino-2-methyl-5-(diphosphooxymethyl)pyrimidine contacts are provided by residues 43–47 and Asn78; that span reads QFRDK. Residues Asp79 and Asp98 each contribute to the Mg(2+) site. Ser117 serves as a coordination point for 4-amino-2-methyl-5-(diphosphooxymethyl)pyrimidine. Residue 143 to 145 participates in 2-[(2R,5Z)-2-carboxy-4-methylthiazol-5(2H)-ylidene]ethyl phosphate binding; the sequence is TNS. Lys146 provides a ligand contact to 4-amino-2-methyl-5-(diphosphooxymethyl)pyrimidine. 2-[(2R,5Z)-2-carboxy-4-methylthiazol-5(2H)-ylidene]ethyl phosphate-binding positions include Gly174 and 194–195; that span reads IS.

Belongs to the thiamine-phosphate synthase family. Mg(2+) is required as a cofactor.

The catalysed reaction is 2-[(2R,5Z)-2-carboxy-4-methylthiazol-5(2H)-ylidene]ethyl phosphate + 4-amino-2-methyl-5-(diphosphooxymethyl)pyrimidine + 2 H(+) = thiamine phosphate + CO2 + diphosphate. It carries out the reaction 2-(2-carboxy-4-methylthiazol-5-yl)ethyl phosphate + 4-amino-2-methyl-5-(diphosphooxymethyl)pyrimidine + 2 H(+) = thiamine phosphate + CO2 + diphosphate. The enzyme catalyses 4-methyl-5-(2-phosphooxyethyl)-thiazole + 4-amino-2-methyl-5-(diphosphooxymethyl)pyrimidine + H(+) = thiamine phosphate + diphosphate. Its pathway is cofactor biosynthesis; thiamine diphosphate biosynthesis; thiamine phosphate from 4-amino-2-methyl-5-diphosphomethylpyrimidine and 4-methyl-5-(2-phosphoethyl)-thiazole: step 1/1. Condenses 4-methyl-5-(beta-hydroxyethyl)thiazole monophosphate (THZ-P) and 2-methyl-4-amino-5-hydroxymethyl pyrimidine pyrophosphate (HMP-PP) to form thiamine monophosphate (TMP). The protein is Thiamine-phosphate synthase of Lactococcus lactis subsp. cremoris (strain SK11).